We begin with the raw amino-acid sequence, 177 residues long: Large ribosomal subunit protein uL6 (177 aa).

Belongs to the universal ribosomal protein uL6 family. Part of the 50S ribosomal subunit.

This protein binds to the 23S rRNA, and is important in its secondary structure. It is located near the subunit interface in the base of the L7/L12 stalk, and near the tRNA binding site of the peptidyltransferase center. The chain is Large ribosomal subunit protein uL6 from Erwinia tasmaniensis (strain DSM 17950 / CFBP 7177 / CIP 109463 / NCPPB 4357 / Et1/99).